Here is a 528-residue protein sequence, read N- to C-terminus: Nucleoporin ASM4 (528 aa).

Residues phenylalanine 2–glycine 3 form an FG 1 repeat. Over residues threonine 23–phenylalanine 50 the composition is skewed to low complexity. Disordered stretches follow at residues threonine 23–serine 64 and isoleucine 88–alanine 144. Polar residues-rich tracts occupy residues asparagine 51–serine 64 and glutamine 97–asparagine 108. An FG 2 repeat occupies phenylalanine 61–glycine 62. Positions proline 110–threonine 125 are enriched in basic residues. Residues glutamine 127 to serine 141 show a composition bias toward low complexity. FG repeat units follow at residues phenylalanine 195–glycine 196, phenylalanine 274–glycine 275, and phenylalanine 291–glycine 292. One can recognise an RRM Nup35-type domain in the interval serine 265–glutamine 394. Phosphoserine is present on residues serine 458 and serine 464. The stretch at asparagine 490–glutamate 510 forms a coiled coil. One copy of the FG 6 repeat lies at phenylalanine 523–glycine 524.

Component of the nuclear pore complex (NPC). NPC constitutes the exclusive means of nucleocytoplasmic transport. NPCs allow the passive diffusion of ions and small molecules and the active, nuclear transport receptor-mediated bidirectional transport of macromolecules such as proteins, RNAs, ribonucleoparticles (RNPs), and ribosomal subunits across the nuclear envelope. Due to its 8-fold rotational symmetry, all subunits are present with 8 copies or multiples thereof. ASM4 may form a subcomplex with NUP53, NDC1, and NUP170. Phosphorylated by CDC28.

It is found in the nucleus. The protein localises to the nuclear pore complex. It localises to the nucleus membrane. Its function is as follows. Functions as a component of the nuclear pore complex (NPC). NPC components, collectively referred to as nucleoporins (NUPs), can play the role of both NPC structural components and of docking or interaction partners for transiently associated nuclear transport factors. Active directional transport is assured by both, a Phe-Gly (FG) repeat affinity gradient for these transport factors across the NPC and a transport cofactor concentration gradient across the nuclear envelope (GSP1 and GSP2 GTPases associated predominantly with GTP in the nucleus, with GDP in the cytoplasm). May have a mitosis control function. The chain is Nucleoporin ASM4 (ASM4) from Saccharomyces cerevisiae (strain ATCC 204508 / S288c) (Baker's yeast).